Here is a 454-residue protein sequence, read N- to C-terminus: L-cysteine desulfhydrase-like protein lolT1 (454 aa).

Lys227 is subject to N6-(pyridoxal phosphate)lysine.

This sequence belongs to the class-V pyridoxal-phosphate-dependent aminotransferase family. It depends on pyridoxal 5'-phosphate as a cofactor.

Its pathway is alkaloid biosynthesis. Its function is as follows. L-cysteine desulfhydrase-like protein; part of the gene cluster that mediates the biosynthesis of loline alkaloids, potent insecticidal agents composed of a pyrrolizidine ring system and an uncommon ether bridge linking carbons 2 and 7. Lolines are structurally differentiated by the various modifications of the L-amino group and include norloline, loline, N-methylloline, N-acetylloline, N-acetylnorloline, and N-formylloline. The first committed step is the condensation of O-acetyl-L-homoserine (derived from L-aspartic acid) and L-proline, probably catalyzed by the gamma-type pyridoxal 5'-phosphate(PLP)-dependent enzyme lolC, to give the diamino diacid, NACPP. Ensuing cyclization, decarboxylation, and acetylation steps yield 1-exo-acetamidopyrrolizidine (AcAP). LolO is required for installation of the ether bridge upon the pathway intermediate, 1-exo-acetamidopyrrolizidine (AcAP). In sequential 2-oxoglutarate- and O(2)-consuming steps, lolO removes hydrogens from C2 and C7 of AcAP to form both carbon-oxygen bonds in N-acetylnorloline (NANL), the precursor to all other lolines. The enzymes lolD, lolE, lolF and lolT have also been proposed to be involved in the ether-bridge installation. Further processing of the exocyclic moiety of NANL by fungal N-acetamidase (LolN), methyltransferase (LolM), and cytochrome P450 (LolP) enzymes, with occasional involvement of a plant acetyltransferase, generates the other known lolines. LolN transforms NANL to norlonine which is monomethylated and dimethylated to respectively lonine and N-methyllonine (NML) by lolM. LolP catalyzes hydroxylation of the methyl group in N-methylloline (NML) and further oxygenation to N-formylloline (NFL). A plant acetyltransferase is responsible for the acetylation of loline to form N-acetylloline (NAL). LolA might interact with aspartate kinase to prevent feedback inhibition of its activity by these end products and thereby promote production of L-homoserine from L-aspartate. The chain is L-cysteine desulfhydrase-like protein lolT1 from Epichloe uncinata (Endophyte fungus).